The sequence spans 540 residues: Signal peptide peptidase-like 3 (540 aa).

An N-terminal signal peptide occupies residues 1–28 (MSSFDPPNHRYSALVLILLLLGFSVAAA). The Lumenal segment spans residues 29-194 (DDVSWTEDSS…LYAPKRPAVD (166 aa)). The 75-residue stretch at 98–172 (SHLSSRLDGH…ISKSSGDALN (75 aa)) folds into the PA domain. Asn-155 and Asn-172 each carry an N-linked (GlcNAc...) asparagine glycan. The helical transmembrane segment at 195–215 (LTAGLLLLMAVGTVVVASLWS) threads the bilayer. Residues 216 to 250 (ELTDPDQANESYSILAKDVSSAGTRKDDPEKEILD) are Cytoplasmic-facing. Residues 251 to 273 (ISVTGAVFFIVTASIFLLLLFYF) traverse the membrane as a helical segment. Topologically, residues 274–276 (MSS) are lumenal. The helical transmembrane segment at 277-299 (WFVWVLTIFFCIGGMQGMHNIIM) threads the bilayer. The Cytoplasmic portion of the chain corresponds to 300–321 (AVILRKCRHLARKSVKLPLLGT). The chain crosses the membrane as a helical span at residues 322-342 (MSVLSLLVNIVCLAFAVFWFI). The Lumenal portion of the chain corresponds to 343-347 (KRHTS). A helical transmembrane segment spans residues 348–368 (YSWVGQDILGICLMITALQVV). At 369–377 (RLPNIKVAT) the chain is on the cytoplasmic side. A helical membrane pass occupies residues 378-398 (VLLCCAFVYDIFWVFISPLIF). The active site involves Asp-387. Residues 399–429 (HESVMIVVAQGDSSTGESIPMLLRIPRFFDP) are Lumenal-facing. The helical transmembrane segment at 430–450 (WGGYDMIGFGDILFPGLLISF) threads the bilayer. The active site involves Asp-440. The Cytoplasmic segment spans residues 451 to 466 (ASRYDKIKKRVISNGY). Residues 467 to 487 (FLWLTIGYGIGLLLTYLGLYL) form a helical membrane-spanning segment. Residues 488-492 (MDGHG) lie on the Lumenal side of the membrane. The chain crosses the membrane as a helical span at residues 493-513 (QPALLYIVPCTLGLAVILGLV). Positions 494-496 (PAL) match the PAL motif. At 514–540 (RGELKELWNYGIEESESHTPEDPMPVA) the chain is on the cytoplasmic side.

Belongs to the peptidase A22B family. Post-translationally, glycosylated. As to expression, ubiquitous.

It is found in the endosome membrane. Functionally, intramembrane-cleaving aspartic protease (I-CLiP) that cleaves type II membrane signal peptides in the hydrophobic plane of the membrane. The protein is Signal peptide peptidase-like 3 (SPPL3) of Arabidopsis thaliana (Mouse-ear cress).